Reading from the N-terminus, the 307-residue chain is Acetyl-coenzyme A carboxylase carboxyl transferase subunit beta (307 aa).

Positions 1-21 (MAMADQRNDKPGRPAAQRERR) are disordered. A CoA carboxyltransferase N-terminal domain is found at 43–307 (LWVKCPETGE…MGRERLSPAA (265 aa)).

Belongs to the AccD/PCCB family. Acetyl-CoA carboxylase is a heterohexamer composed of biotin carboxyl carrier protein (AccB), biotin carboxylase (AccC) and two subunits each of ACCase subunit alpha (AccA) and ACCase subunit beta (AccD).

The protein localises to the cytoplasm. It catalyses the reaction N(6)-carboxybiotinyl-L-lysyl-[protein] + acetyl-CoA = N(6)-biotinyl-L-lysyl-[protein] + malonyl-CoA. It functions in the pathway lipid metabolism; malonyl-CoA biosynthesis; malonyl-CoA from acetyl-CoA: step 1/1. Functionally, component of the acetyl coenzyme A carboxylase (ACC) complex. Biotin carboxylase (BC) catalyzes the carboxylation of biotin on its carrier protein (BCCP) and then the CO(2) group is transferred by the transcarboxylase to acetyl-CoA to form malonyl-CoA. The chain is Acetyl-coenzyme A carboxylase carboxyl transferase subunit beta from Phenylobacterium zucineum (strain HLK1).